We begin with the raw amino-acid sequence, 630 residues long: MRERGQDSLAGLVLYVGLFGHPGMLHRAKYSRFRNESITSLDEGSSGGSVGNKGSPQPPHPALAPHLPTEDATLPSQESPTPLCTLIPRMASMKLANPATLLSLKNFCLGTKEVPRLKLQESRDPGSSGPSSPETSLSRSGTAPPPQQDLVGHRATALTPDSCPLPGPGEPTLRSRQDRHFLQHLLGMGMNYCVRYMGCVEVLQSMRSLDFGMRTQVTREAISRLCEAVPGANGAIKKRKPPVKFLSTVLGKSNLQFSGMNIKLTISTCSLTLMNLDNQQIIANHHMQSISFASGGDPDTTDYVAYVAKDPVNQRACHILECHNGMAQDVISTIGQAFELRFKQYLKNPSLNTSCESEEVHIDSHAEEREDHEYYNEIPGKQPPVGGVSDMRIKVQATEQMAYCPIQCEKLCYLPGNSKCSSVYENCLEQSRAIGNVHPRGVQSQRDTSLLKHTCRVDLFDDPCYINTQALQSTPGSAGNQRSAQPLGSPWHCGKAPETVQPGATAQPASSHSLPHIKQQLWSEECYHGKLSRKAAESLLVKDGDFLVRESATSPGQYVLSGLQGGQAKHLLLVDPEGKVRTKDHVFDNVGHLIRYHMDNSLPIISSGSEVSLKQPVRKDNNPALLHSNK.

The interval 1–185 is CH2; that stretch reads MRERGQDSLA…RQDRHFLQHL (185 aa). Disordered regions lie at residues 39-80 and 118-150; these read TSLD…QESP and KLQE…QQDL. A compositionally biased stretch (low complexity) spans 125–142; it reads PGSSGPSSPETSLSRSGT. Residues 186 to 369 form the PID domain; that stretch reads LGMGMNYCVR…VHIDSHAEER (184 aa). The tract at residues 370 to 525 is CH1; sequence EDHEYYNEIP…HIKQQLWSEE (156 aa). Y424 carries the post-translational modification Phosphotyrosine. Composition is skewed to polar residues over residues 471 to 486 and 502 to 513; these read LQST…SAQP and PGATAQPASSHS. The tract at residues 471-514 is disordered; that stretch reads LQSTPGSAGNQRSAQPLGSPWHCGKAPETVQPGATAQPASSHSL. In terms of domain architecture, SH2 spans 526 to 617; the sequence is CYHGKLSRKA…GSEVSLKQPV (92 aa).

As to quaternary structure, interacts (via PID domain) with phosphorylated MUSK (via NPXY motif); undergoes tyrosine phosphorylation downstream of activated MUSK. Interacts with GRB2; the interaction is dependent of Tyr-424 phosphorylation and increased by EGF. Phosphorylated; the phosphorylation is enhanced by EGF. Phosphorylation at Tyr-424 is required for the interaction with GRB2. Only expressed in melanomas. Weakly expressed in normal melanocytes and benign nevi. Highly expressed at the transition from radial growth phase to vertical growth phase and metastatic melanomas, when tumor cells acquire migratory competence and invasive potential.

Its subcellular location is the postsynaptic cell membrane. In terms of biological role, activates both Ras-dependent and Ras-independent migratory pathways in melanomas. Contributes to the early phases of agrin-induced tyrosine phosphorylation of CHRNB1. This chain is SHC-transforming protein 4 (SHC4), found in Homo sapiens (Human).